The sequence spans 480 residues: 2-succinylbenzoate--CoA ligase (480 aa).

The protein belongs to the ATP-dependent AMP-binding enzyme family. MenE subfamily.

The catalysed reaction is 2-succinylbenzoate + ATP + CoA = 2-succinylbenzoyl-CoA + AMP + diphosphate. It functions in the pathway quinol/quinone metabolism; 1,4-dihydroxy-2-naphthoate biosynthesis; 1,4-dihydroxy-2-naphthoate from chorismate: step 5/7. Its pathway is quinol/quinone metabolism; menaquinone biosynthesis. In terms of biological role, converts 2-succinylbenzoate (OSB) to 2-succinylbenzoyl-CoA (OSB-CoA). This chain is 2-succinylbenzoate--CoA ligase, found in Oceanobacillus iheyensis (strain DSM 14371 / CIP 107618 / JCM 11309 / KCTC 3954 / HTE831).